The sequence spans 222 residues: Pyridoxine/pyridoxamine 5'-phosphate oxidase (222 aa).

FMN contacts are provided by residues 69–74 (RMVLLK), 84–85 (YT), lysine 91, and glutamine 113. Lysine 74 is a binding site for substrate. Substrate contacts are provided by tyrosine 131, arginine 135, and serine 139. FMN-binding positions include 148-149 (QS) and tryptophan 193. Position 199–201 (199–201 (RLH)) interacts with substrate. Arginine 203 provides a ligand contact to FMN.

This sequence belongs to the pyridoxamine 5'-phosphate oxidase family. Homodimer. FMN is required as a cofactor.

The catalysed reaction is pyridoxamine 5'-phosphate + O2 + H2O = pyridoxal 5'-phosphate + H2O2 + NH4(+). It catalyses the reaction pyridoxine 5'-phosphate + O2 = pyridoxal 5'-phosphate + H2O2. It participates in cofactor metabolism; pyridoxal 5'-phosphate salvage; pyridoxal 5'-phosphate from pyridoxamine 5'-phosphate: step 1/1. The protein operates within cofactor metabolism; pyridoxal 5'-phosphate salvage; pyridoxal 5'-phosphate from pyridoxine 5'-phosphate: step 1/1. Functionally, catalyzes the oxidation of either pyridoxine 5'-phosphate (PNP) or pyridoxamine 5'-phosphate (PMP) into pyridoxal 5'-phosphate (PLP). This chain is Pyridoxine/pyridoxamine 5'-phosphate oxidase, found in Maricaulis maris (strain MCS10) (Caulobacter maris).